The following is a 156-amino-acid chain: Small ribosomal subunit protein uS7 (156 aa).

This sequence belongs to the universal ribosomal protein uS7 family. As to quaternary structure, part of the 30S ribosomal subunit. Contacts proteins S9 and S11.

Functionally, one of the primary rRNA binding proteins, it binds directly to 16S rRNA where it nucleates assembly of the head domain of the 30S subunit. Is located at the subunit interface close to the decoding center, probably blocks exit of the E-site tRNA. The chain is Small ribosomal subunit protein uS7 from Pseudomonas entomophila (strain L48).